Here is a 469-residue protein sequence, read N- to C-terminus: Ribulose bisphosphate carboxylase large chain (469 aa).

N6,N6,N6-trimethyllysine is present on lysine 5. 2 residues coordinate substrate: asparagine 114 and threonine 164. The active-site Proton acceptor is the lysine 166. Lysine 168 contacts substrate. The Mg(2+) site is built by lysine 192, aspartate 194, and glutamate 195. Position 192 is an N6-carboxylysine (lysine 192). The active-site Proton acceptor is the histidine 285. 3 residues coordinate substrate: arginine 286, histidine 318, and serine 370.

It belongs to the RuBisCO large chain family. Type I subfamily. As to quaternary structure, heterohexadecamer of 8 large chains and 8 small chains; disulfide-linked. The disulfide link is formed within the large subunit homodimers. Mg(2+) serves as cofactor. In terms of processing, the disulfide bond which can form in the large chain dimeric partners within the hexadecamer appears to be associated with oxidative stress and protein turnover.

The protein localises to the plastid. The protein resides in the chloroplast. It catalyses the reaction 2 (2R)-3-phosphoglycerate + 2 H(+) = D-ribulose 1,5-bisphosphate + CO2 + H2O. The enzyme catalyses D-ribulose 1,5-bisphosphate + O2 = 2-phosphoglycolate + (2R)-3-phosphoglycerate + 2 H(+). Its function is as follows. RuBisCO catalyzes two reactions: the carboxylation of D-ribulose 1,5-bisphosphate, the primary event in carbon dioxide fixation, as well as the oxidative fragmentation of the pentose substrate in the photorespiration process. Both reactions occur simultaneously and in competition at the same active site. The polypeptide is Ribulose bisphosphate carboxylase large chain (Fleroya rubrostipulata (Mitragyna rubrostipulata)).